The sequence spans 227 residues: Testis-expressed protein 30 (227 aa).

This chain is Testis-expressed protein 30 (TEX30), found in Homo sapiens (Human).